The primary structure comprises 303 residues: Phytochrome-associated serine/threonine-protein phosphatase (303 aa).

The Zn(2+) site is built by D50, H52, D78, and N110. Catalysis depends on H111, which acts as the Proton donor. Zn(2+)-binding residues include H160 and H234.

The protein belongs to the PPP phosphatase family. PP-6 (PP-V) subfamily. As to quaternary structure, interacts with PHYA and PHYB, mostly when they are phosphorylated and in Pfr forms. Requires Zn(2+) as cofactor. Mostly expressed in flowers and stems.

The protein resides in the cytoplasm. It carries out the reaction O-phospho-L-seryl-[protein] + H2O = L-seryl-[protein] + phosphate. The catalysed reaction is O-phospho-L-threonyl-[protein] + H2O = L-threonyl-[protein] + phosphate. Catalytic subunit of protein phosphatase 6 (PP6). Dephosphorylates phosphorylated phytochromes, with a preference toward Pfr forms. Plays a major role in the photoperiodic control of flowering time in long days by modulating phytochrome signals in flowering time control. The polypeptide is Phytochrome-associated serine/threonine-protein phosphatase (Pisum sativum (Garden pea)).